A 276-amino-acid polypeptide reads, in one-letter code: Thymidylate synthase (276 aa).

Arg-26 contributes to the dUMP binding site. His-56 serves as a coordination point for (6R)-5,10-methylene-5,6,7,8-tetrahydrofolate. Position 131–132 (131–132 (RR)) interacts with dUMP. Cys-151 acts as the Nucleophile in catalysis. DUMP is bound by residues 178 to 181 (RSAD), Asn-189, and 219 to 221 (HIY). Asp-181 contacts (6R)-5,10-methylene-5,6,7,8-tetrahydrofolate. Ala-275 is a (6R)-5,10-methylene-5,6,7,8-tetrahydrofolate binding site.

The protein belongs to the thymidylate synthase family. Bacterial-type ThyA subfamily. As to quaternary structure, homodimer.

It is found in the cytoplasm. It catalyses the reaction dUMP + (6R)-5,10-methylene-5,6,7,8-tetrahydrofolate = 7,8-dihydrofolate + dTMP. Its pathway is pyrimidine metabolism; dTTP biosynthesis. Its function is as follows. Catalyzes the reductive methylation of 2'-deoxyuridine-5'-monophosphate (dUMP) to 2'-deoxythymidine-5'-monophosphate (dTMP) while utilizing 5,10-methylenetetrahydrofolate (mTHF) as the methyl donor and reductant in the reaction, yielding dihydrofolate (DHF) as a by-product. This enzymatic reaction provides an intracellular de novo source of dTMP, an essential precursor for DNA biosynthesis. In Polaromonas naphthalenivorans (strain CJ2), this protein is Thymidylate synthase.